We begin with the raw amino-acid sequence, 568 residues long: Tyrosine-protein kinase transforming protein Src (568 aa).

The segment at 1–58 (MGSSKSKPKDPSQRRRSLEPPDSTHHGGFPASQTPNKTAAPDTHRTPSRSFGTVATEP) is disordered. The N-myristoyl glycine; by host moiety is linked to residue Gly2. Residues 7-25 (KPKDPSQRRRSLEPPDSTH) are compositionally biased toward basic and acidic residues. The region spanning 81 to 142 (GGVTTFVALY…PSNYVAPSDS (62 aa)) is the SH3 domain. In terms of domain architecture, SH2 spans 148-245 (WYFGKITRRE…GLCHRLTNVC (98 aa)). Positions 267 to 520 (LRLEVKLGQG…YLQAFLEDYF (254 aa)) constitute a Protein kinase domain. ATP is bound by residues 273 to 281 (LGQGCFGEV) and Lys295. The active-site Proton acceptor is Asp386. Phosphotyrosine; by autocatalysis is present on Tyr416.

Belongs to the protein kinase superfamily. Tyr protein kinase family. SRC subfamily. In terms of processing, the phosphorylated form is termed pp60v-src.

The catalysed reaction is L-tyrosyl-[protein] + ATP = O-phospho-L-tyrosyl-[protein] + ADP + H(+). Functionally, this phosphoprotein, required for both the initiation and the maintenance of neoplastic transformation, is a protein kinase that catalyzes the phosphorylation of tyrosine residues in vitro. The protein is Tyrosine-protein kinase transforming protein Src (V-SRC) of Galliformes.